Reading from the N-terminus, the 178-residue chain is Large ribosomal subunit protein uL5 (178 aa).

The protein belongs to the universal ribosomal protein uL5 family. As to quaternary structure, part of the 50S ribosomal subunit; part of the 5S rRNA/L5/L18/L25 subcomplex. Contacts the 5S rRNA and the P site tRNA. Forms a bridge to the 30S subunit in the 70S ribosome.

Functionally, this is one of the proteins that bind and probably mediate the attachment of the 5S RNA into the large ribosomal subunit, where it forms part of the central protuberance. In the 70S ribosome it contacts protein S13 of the 30S subunit (bridge B1b), connecting the 2 subunits; this bridge is implicated in subunit movement. Contacts the P site tRNA; the 5S rRNA and some of its associated proteins might help stabilize positioning of ribosome-bound tRNAs. This is Large ribosomal subunit protein uL5 from Prochlorococcus marinus (strain MIT 9515).